A 373-amino-acid polypeptide reads, in one-letter code: MALRCWDAARSLGSRIFGRYACSVRALSSLPDEKKKFLHNGPDLQDFVSGDLADKSTWDDYKGNLKRQKGERLRLPPWLKTKIPMGKNYNKLKNTLRNLNLHTVCEEARCPNIGECWGGGEYATATATIMLMGDTCTRGCRFCSVKTARNPPPLDPSEPDNTARAIAEWGLDYVVLTSVDRDDVVDGGAEHIAKTVSCLKERNPKILVECLTPDFRGDLRAVEKVALSGLDVYAHNVETVPELQRKVRDPRANFDQSLRVLKHAKEVQPDVVSKTSIMLGLGETDEQVYATMKALRAADVDCLTLGQYMQPTKRHLKVEEYVTPEKFKYWEEVGNELGFHYTASGPLVRSSYKAGEFFLKNLVAKRKTKVSKV.

A mitochondrion-targeting transit peptide spans 1-26 (MALRCWDAARSLGSRIFGRYACSVRA). Residues Cys-105, Cys-110, Cys-116, Cys-136, Cys-140, Cys-143, and Ser-351 each contribute to the [4Fe-4S] cluster site. Residues 121–340 (EYATATATIM…EEVGNELGFH (220 aa)) form the Radical SAM core domain.

It belongs to the radical SAM superfamily. Lipoyl synthase family. Requires [4Fe-4S] cluster as cofactor.

The protein localises to the mitochondrion. It carries out the reaction [[Fe-S] cluster scaffold protein carrying a second [4Fe-4S](2+) cluster] + N(6)-octanoyl-L-lysyl-[protein] + 2 oxidized [2Fe-2S]-[ferredoxin] + 2 S-adenosyl-L-methionine + 4 H(+) = [[Fe-S] cluster scaffold protein] + N(6)-[(R)-dihydrolipoyl]-L-lysyl-[protein] + 4 Fe(3+) + 2 hydrogen sulfide + 2 5'-deoxyadenosine + 2 L-methionine + 2 reduced [2Fe-2S]-[ferredoxin]. It functions in the pathway protein modification; protein lipoylation via endogenous pathway; protein N(6)-(lipoyl)lysine from octanoyl-[acyl-carrier-protein]: step 2/2. Catalyzes the radical-mediated insertion of two sulfur atoms into the C-6 and C-8 positions of the octanoyl moiety bound to the lipoyl domains of lipoate-dependent enzymes, thereby converting the octanoylated domains into lipoylated derivatives. This Rattus norvegicus (Rat) protein is Lipoyl synthase, mitochondrial (Lias).